The following is a 226-amino-acid chain: Lipoprotein signal peptidase (226 aa).

3 helical membrane-spanning segments follow: residues 12-32 (KVVAALIVLLLVVDQVIKIWV), 69-89 (FLSLFRIVAMGFCIYLLAKLV), and 103-123 (SLIIAGGIGNIIDSIFYGVIF). Residues Asp-150 and Asp-184 contribute to the active site. Residues 173–193 (FVFFHPVFNFADSCISIGLIL) form a helical membrane-spanning segment.

Belongs to the peptidase A8 family.

The protein resides in the cell inner membrane. The catalysed reaction is Release of signal peptides from bacterial membrane prolipoproteins. Hydrolyzes -Xaa-Yaa-Zaa-|-(S,diacylglyceryl)Cys-, in which Xaa is hydrophobic (preferably Leu), and Yaa (Ala or Ser) and Zaa (Gly or Ala) have small, neutral side chains.. The protein operates within protein modification; lipoprotein biosynthesis (signal peptide cleavage). This protein specifically catalyzes the removal of signal peptides from prolipoproteins. This Porphyromonas gingivalis (strain ATCC 33277 / DSM 20709 / CIP 103683 / JCM 12257 / NCTC 11834 / 2561) protein is Lipoprotein signal peptidase.